A 521-amino-acid polypeptide reads, in one-letter code: Glycogen synthase (521 aa).

K18 provides a ligand contact to ADP-alpha-D-glucose.

It belongs to the glycosyltransferase 1 family. Bacterial/plant glycogen synthase subfamily.

It carries out the reaction [(1-&gt;4)-alpha-D-glucosyl](n) + ADP-alpha-D-glucose = [(1-&gt;4)-alpha-D-glucosyl](n+1) + ADP + H(+). It participates in glycan biosynthesis; glycogen biosynthesis. In terms of biological role, synthesizes alpha-1,4-glucan chains using ADP-glucose. The polypeptide is Glycogen synthase (Bordetella petrii (strain ATCC BAA-461 / DSM 12804 / CCUG 43448)).